Here is a 276-residue protein sequence, read N- to C-terminus: Undecaprenyl-diphosphatase (276 aa).

The next 6 helical transmembrane spans lie at 43-63 (RAMA…VWEF), 85-105 (LNLL…ADTI), 109-129 (LFNA…MLWA), 183-203 (AATE…AVYS), 218-238 (VFAI…RGLL), and 254-274 (IAFG…WASA).

This sequence belongs to the UppP family.

It is found in the cell inner membrane. The enzyme catalyses di-trans,octa-cis-undecaprenyl diphosphate + H2O = di-trans,octa-cis-undecaprenyl phosphate + phosphate + H(+). Its function is as follows. Catalyzes the dephosphorylation of undecaprenyl diphosphate (UPP). Confers resistance to bacitracin. The protein is Undecaprenyl-diphosphatase of Pseudomonas syringae pv. syringae (strain B728a).